The following is a 616-amino-acid chain: Dihydroxy-acid dehydratase (616 aa).

Asp81 provides a ligand contact to Mg(2+). Cys122 is a [2Fe-2S] cluster binding site. Mg(2+)-binding residues include Asp123 and Lys124. Lys124 is modified (N6-carboxylysine). Cys195 serves as a coordination point for [2Fe-2S] cluster. Glu491 contacts Mg(2+). Ser517 serves as the catalytic Proton acceptor.

The protein belongs to the IlvD/Edd family. In terms of assembly, homodimer. [2Fe-2S] cluster is required as a cofactor. Requires Mg(2+) as cofactor.

The catalysed reaction is (2R)-2,3-dihydroxy-3-methylbutanoate = 3-methyl-2-oxobutanoate + H2O. It carries out the reaction (2R,3R)-2,3-dihydroxy-3-methylpentanoate = (S)-3-methyl-2-oxopentanoate + H2O. Its pathway is amino-acid biosynthesis; L-isoleucine biosynthesis; L-isoleucine from 2-oxobutanoate: step 3/4. It participates in amino-acid biosynthesis; L-valine biosynthesis; L-valine from pyruvate: step 3/4. In terms of biological role, functions in the biosynthesis of branched-chain amino acids. Catalyzes the dehydration of (2R,3R)-2,3-dihydroxy-3-methylpentanoate (2,3-dihydroxy-3-methylvalerate) into 2-oxo-3-methylpentanoate (2-oxo-3-methylvalerate) and of (2R)-2,3-dihydroxy-3-methylbutanoate (2,3-dihydroxyisovalerate) into 2-oxo-3-methylbutanoate (2-oxoisovalerate), the penultimate precursor to L-isoleucine and L-valine, respectively. This is Dihydroxy-acid dehydratase from Salmonella heidelberg (strain SL476).